The following is a 37-amino-acid chain: Large ribosomal subunit protein bL36c (37 aa).

This sequence belongs to the bacterial ribosomal protein bL36 family.

The protein resides in the plastid. The sequence is that of Large ribosomal subunit protein bL36c (rpl36) from Epifagus virginiana (Beechdrops).